A 192-amino-acid polypeptide reads, in one-letter code: Ornithine lipid N-methyltransferase (192 aa).

This sequence belongs to the methyltransferase superfamily.

It catalyses the reaction an N(2)-[(3R)-3-(2-saturated-acyloxy)acyl]-L-ornithine lipid + 3 S-adenosyl-L-methionine = an N,N,N-trimethylornithine lipid + 3 S-adenosyl-L-homocysteine + 3 H(+). Catalyzes the 3-fold methylation of ornithine lipids. Forms ornithine lipids that are mono-, di-, and trimethylated on the delta-nitrogen of the ornithine head group. The protein is Ornithine lipid N-methyltransferase of Singulisphaera acidiphila (strain ATCC BAA-1392 / DSM 18658 / VKM B-2454 / MOB10).